The chain runs to 488 residues: Secreted triacylglycerol lipase LIP1 (488 aa).

A signal peptide spans 1-26 (MPSMLSLFYLAQSLFLLLLFPLYGHA). Cysteines 119 and 288 form a disulfide. N-linked (GlcNAc...) asparagine glycosylation occurs at Asn183. Ser201 functions as the Nucleophile in the catalytic mechanism. N-linked (GlcNAc...) asparagine glycosylation occurs at Asn316. Residues Asp348 and His382 contribute to the active site. Residues 461-488 (SKSGSSLKSHSHSQTHKHRKDVSTISNA) are disordered. Basic residues predominate over residues 469–480 (SHSHSQTHKHRK).

It belongs to the AB hydrolase superfamily. Lipase family. Class Lip subfamily.

It localises to the secreted. The catalysed reaction is a triacylglycerol + H2O = a diacylglycerol + a fatty acid + H(+). The enzyme catalyses a monoacylglycerol + H2O = glycerol + a fatty acid + H(+). It catalyses the reaction a diacylglycerol + H2O = a monoacylglycerol + a fatty acid + H(+). Its activity is regulated as follows. Inhibited by different metal ions including Fe(2+), Fe(3+), Cu(2+), and Zn(2+). The monovalent ions Na(+) and K(+) exhibit less dramatic inhibition. Its function is as follows. Secreted lipase that releases free fatty acids from monoacylglycerol and triacylglycerol but has no phospholipase or lysophospholipase activities. Has minor esterase activity. Due to an absence of fatty acid synthase genes in Malassezia species, secretory lipases are essential for the yeast to generate free fatty acids from degradation of sebum and assimilate them as lipid sources for growth. Plays important roles not only in lipid metabolism but also in the immune response of host cells and pathogenesis. Hydrolyzes lipids, such as Tween 20, 40 and 80, with Tween 80 being the best substrate. This is Secreted triacylglycerol lipase LIP1 from Malassezia furfur (Pityriasis versicolor infection agent).